The sequence spans 588 residues: Adenine deaminase (588 aa).

This sequence belongs to the metallo-dependent hydrolases superfamily. Adenine deaminase family. In terms of assembly, homodimer. Requires Mn(2+) as cofactor.

It catalyses the reaction adenine + H2O + H(+) = hypoxanthine + NH4(+). The protein is Adenine deaminase of Escherichia coli (strain 55989 / EAEC).